A 310-amino-acid chain; its full sequence is HPr kinase/phosphorylase (310 aa).

Residues His138 and Lys159 contribute to the active site. Position 153–160 (153–160 (GDSGIGKS)) interacts with ATP. Position 160 (Ser160) interacts with Mg(2+). Residue Asp177 is the Proton acceptor; for phosphorylation activity. Proton donor; for dephosphorylation activity of the active site. The important for the catalytic mechanism of both phosphorylation and dephosphorylation stretch occupies residues 201-210 (LEIRGVGIID). Glu202 contacts Mg(2+). Residue Arg243 is part of the active site. The segment at 264 to 269 (PVKTGR) is important for the catalytic mechanism of dephosphorylation.

It belongs to the HPrK/P family. In terms of assembly, homohexamer. Mg(2+) is required as a cofactor.

It catalyses the reaction [HPr protein]-L-serine + ATP = [HPr protein]-O-phospho-L-serine + ADP + H(+). The enzyme catalyses [HPr protein]-O-phospho-L-serine + phosphate + H(+) = [HPr protein]-L-serine + diphosphate. Catalyzes the ATP- as well as the pyrophosphate-dependent phosphorylation of a specific serine residue in HPr, a phosphocarrier protein of the phosphoenolpyruvate-dependent sugar phosphotransferase system (PTS). HprK/P also catalyzes the pyrophosphate-producing, inorganic phosphate-dependent dephosphorylation (phosphorolysis) of seryl-phosphorylated HPr (P-Ser-HPr). The two antagonistic activities of HprK/P are regulated by several intracellular metabolites, which change their concentration in response to the absence or presence of rapidly metabolisable carbon sources (glucose, fructose, etc.) in the growth medium. Therefore, by controlling the phosphorylation state of HPr, HPrK/P is a sensor enzyme that plays a major role in the regulation of carbon metabolism and sugar transport: it mediates carbon catabolite repression (CCR), and regulates PTS-catalyzed carbohydrate uptake and inducer exclusion. This chain is HPr kinase/phosphorylase (hprK), found in Streptococcus pyogenes serotype M3 (strain ATCC BAA-595 / MGAS315).